An 89-amino-acid polypeptide reads, in one-letter code: Small ribosomal subunit protein uS15 (89 aa).

It belongs to the universal ribosomal protein uS15 family. In terms of assembly, part of the 30S ribosomal subunit. Forms a bridge to the 50S subunit in the 70S ribosome, contacting the 23S rRNA.

In terms of biological role, one of the primary rRNA binding proteins, it binds directly to 16S rRNA where it helps nucleate assembly of the platform of the 30S subunit by binding and bridging several RNA helices of the 16S rRNA. Functionally, forms an intersubunit bridge (bridge B4) with the 23S rRNA of the 50S subunit in the ribosome. The protein is Small ribosomal subunit protein uS15 of Thermosynechococcus vestitus (strain NIES-2133 / IAM M-273 / BP-1).